The sequence spans 585 residues: tRNA 5-methylaminomethyl-2-thiouridine biosynthesis bifunctional protein MnmC (585 aa).

Positions 1–236 (MTPDGLYCDP…KRERLEAVWP (236 aa)) are tRNA (mnm(5)s(2)U34)-methyltransferase. Residues 254–585 (LGAGIAGASL…SRRAGQGAAG (332 aa)) are FAD-dependent cmnm(5)s(2)U34 oxidoreductase. Residues 564 to 585 (EAMAPGRFAERRSRRAGQGAAG) are disordered.

The protein in the N-terminal section; belongs to the methyltransferase superfamily. tRNA (mnm(5)s(2)U34)-methyltransferase family. It in the C-terminal section; belongs to the DAO family. FAD serves as cofactor.

The protein resides in the cytoplasm. The enzyme catalyses 5-aminomethyl-2-thiouridine(34) in tRNA + S-adenosyl-L-methionine = 5-methylaminomethyl-2-thiouridine(34) in tRNA + S-adenosyl-L-homocysteine + H(+). In terms of biological role, catalyzes the last two steps in the biosynthesis of 5-methylaminomethyl-2-thiouridine (mnm(5)s(2)U) at the wobble position (U34) in tRNA. Catalyzes the FAD-dependent demodification of cmnm(5)s(2)U34 to nm(5)s(2)U34, followed by the transfer of a methyl group from S-adenosyl-L-methionine to nm(5)s(2)U34, to form mnm(5)s(2)U34. This is tRNA 5-methylaminomethyl-2-thiouridine biosynthesis bifunctional protein MnmC from Maricaulis maris (strain MCS10) (Caulobacter maris).